The primary structure comprises 971 residues: Protein cwh43 (971 aa).

The interval 1 to 242 is PGAP2-like; that stretch reads MTEKTSSLVF…PSSFATRKKE (242 aa). 19 helical membrane passes run 15 to 35, 71 to 91, 101 to 121, 129 to 149, 161 to 181, 188 to 208, 286 to 306, 313 to 333, 336 to 356, 366 to 386, 397 to 417, 432 to 452, 467 to 487, 509 to 529, 532 to 552, 555 to 575, 588 to 608, 622 to 642, and 673 to 693; these read VALV…ALAL, VFQW…LLWF, VIIT…WVYV, WHDI…ILVS, IRNI…YWYI, IPGA…WDIL, VYLS…VWYF, ISGY…GIPL, KFAS…IAAY, FVTA…FSNI, ISTF…FFSN, QIPA…FHVQ, ITAL…HTFL, YPHG…APYL, SGAF…FMYI, GWCS…YSFA, VWGG…WVVA, TSYI…AYSG, and LLTG…NMPP. The PGAP2IP-like stretch occupies residues 243–971; sequence KGEHLSYAEA…LVVHEPWYYD (729 aa). His-826 is a catalytic residue.

The protein in the N-terminal section; belongs to the PGAP2 family. In the C-terminal section; belongs to the PGAP2IP family.

The protein resides in the cell membrane. It is found in the endoplasmic reticulum membrane. In terms of biological role, involved in the maintenance of cell wall integrity. Required for the replacement of the diacylglycerol moiety by ceramides during GPI-anchor maturation. In Schizosaccharomyces pombe (strain 972 / ATCC 24843) (Fission yeast), this protein is Protein cwh43 (cwh43).